We begin with the raw amino-acid sequence, 185 residues long: Kappa-casein (185 aa).

An N-terminal signal peptide occupies residues 1 to 20; that stretch reads MKSFFLVVNILALTLPFLGA. An O-linked (GalNAc...) threonine glycan is attached at T143. S161 is modified (phosphoserine; alternate). An O-linked (GalNAc...) serine; alternate glycan is attached at S161. A glycan (O-linked (GalNAc...) threonine) is linked at T178. S179 is subject to Phosphoserine.

Belongs to the kappa-casein family. Mammary gland specific. Secreted in milk.

Its subcellular location is the secreted. Kappa-casein stabilizes micelle formation, preventing casein precipitation in milk. This chain is Kappa-casein (CSN3), found in Equus caballus (Horse).